A 498-amino-acid chain; its full sequence is Delta(14)-sterol reductase erg24A (498 aa).

4 helical membrane-spanning segments follow: residues 30–50 (LGAF…TFLC), 91–111 (VTVW…FLPG), 136–156 (ILIL…FVVW), and 163–183 (YVQI…FVYA). Asparagine 257 carries an N-linked (GlcNAc...) asparagine glycan. 3 consecutive transmembrane segments (helical) span residues 275 to 295 (IVLS…MEPA), 302 to 322 (VIMD…VPFI), and 339 to 359 (LREI…FRGA). Residues lysine 363, arginine 367, tryptophan 395, and 402–403 (NY) each bind NADP(+). An N-linked (GlcNAc...) asparagine glycan is attached at asparagine 429. A helical membrane pass occupies residues 444–464 (VRGWGMIFTYFFLVYFGALLI). Residues aspartate 470, 474 to 478 (CKSKY), and tyrosine 485 each bind NADP(+).

It belongs to the ERG4/ERG24 family.

The protein resides in the endoplasmic reticulum membrane. It participates in steroid metabolism; ergosterol biosynthesis. Delta(14)-sterol reductase; part of the third module of ergosterol biosynthesis pathway that includes the late steps of the pathway. Catalyzes the reduction of the C14=C15 double bond within 4,4,24-trimethyl ergosta-8,14,24(28)-trienolto produce 4,4-dimethylfecosterol. The third module or late pathway involves the ergosterol synthesis itself through consecutive reactions that mainly occur in the endoplasmic reticulum (ER) membrane. Firstly, the squalene synthase erg9 catalyzes the condensation of 2 farnesyl pyrophosphate moieties to form squalene, which is the precursor of all steroids. Squalene synthase is crucial for balancing the incorporation of farnesyl diphosphate (FPP) into sterol and nonsterol isoprene synthesis. Secondly, squalene is converted into lanosterol by the consecutive action of the squalene epoxidase erg1 and the lanosterol synthase erg7. Then, the delta(24)-sterol C-methyltransferase erg6 methylates lanosterol at C-24 to produce eburicol. Eburicol is the substrate of the sterol 14-alpha demethylase encoded by cyp51A and cyp51B, to yield 4,4,24-trimethyl ergosta-8,14,24(28)-trienol. The C-14 reductase erg24 then reduces the C14=C15 double bond which leads to 4,4-dimethylfecosterol. A sequence of further demethylations at C-4, involving the C-4 demethylation complex containing the C-4 methylsterol oxidases erg25A or erg25B, the sterol-4-alpha-carboxylate 3-dehydrogenase erg26 and the 3-keto-steroid reductase erg27, leads to the production of fecosterol via 4-methylfecosterol. The C-8 sterol isomerase erg2 then catalyzes the reaction which results in unsaturation at C-7 in the B ring of sterols and thus converts fecosterol to episterol. The sterol-C5-desaturase erg3B then catalyzes the introduction of a C-5 double bond in the B ring to produce 5-dehydroepisterol. The 2 other sterol-C5-desaturases, erg3A and erg3C, seem to be less important in ergosterol biosynthesis. The C-22 sterol desaturase erg5 further converts 5-dehydroepisterol into ergosta-5,7,22,24(28)-tetraen-3beta-ol by forming the C-22(23) double bond in the sterol side chain. Finally, ergosta-5,7,22,24(28)-tetraen-3beta-ol is substrate of the C-24(28) sterol reductases erg4A and erg4B to produce ergosterol. Possible alternative sterol biosynthetic pathways might exist from fecosterol to ergosterol, depending on the activities of the erg3 isoforms. This is Delta(14)-sterol reductase erg24A from Aspergillus fumigatus (strain ATCC MYA-4609 / CBS 101355 / FGSC A1100 / Af293) (Neosartorya fumigata).